A 207-amino-acid chain; its full sequence is Protein GrpE (207 aa).

Residues 1–11 (MTETDGQKDNN) show a composition bias toward basic and acidic residues. Positions 1 to 39 (MTETDGQKDNNQDTAQAAADPVVSKPYIMPDDPEEGSNE) are disordered.

The protein belongs to the GrpE family. Homodimer.

The protein localises to the cytoplasm. In terms of biological role, participates actively in the response to hyperosmotic and heat shock by preventing the aggregation of stress-denatured proteins, in association with DnaK and GrpE. It is the nucleotide exchange factor for DnaK and may function as a thermosensor. Unfolded proteins bind initially to DnaJ; upon interaction with the DnaJ-bound protein, DnaK hydrolyzes its bound ATP, resulting in the formation of a stable complex. GrpE releases ADP from DnaK; ATP binding to DnaK triggers the release of the substrate protein, thus completing the reaction cycle. Several rounds of ATP-dependent interactions between DnaJ, DnaK and GrpE are required for fully efficient folding. This Rhodopseudomonas palustris (strain TIE-1) protein is Protein GrpE.